Reading from the N-terminus, the 553-residue chain is Mucolipin-3 (553 aa).

The Cytoplasmic segment spans residues 1 to 62 (MANPEIVISS…FWARGRKPWK (62 aa)). Residues 52 to 62 (KFWARGRKPWK) form an interaction with phosphoinositides region. Residues 63–83 (LAIQILKIAMVTIQLVLFGLS) traverse the membrane as a helical segment. The Extracellular portion of the chain corresponds to 84–283 (NQMVVAFKEE…VSGSIQKNTH (200 aa)). The interval 104-118 (KGYIDRMDDTYAVYT) is extracellular/lumenal pore loop. A glycan (N-linked (GlcNAc...) asparagine) is linked at Asn138. Cysteines 159 and 185 form a disulfide. Asn205 carries N-linked (GlcNAc...) asparagine glycosylation. Cys238 and Cys269 are oxidised to a cystine. A helical transmembrane segment spans residues 284–304 (NMMIFDAFVILTCLVSLILCI). The Cytoplasmic segment spans residues 305 to 341 (RSVISGLQLQQEFVNFFLLHYKKDVSVSDQMEFVNGW). A helical membrane pass occupies residues 342–362 (YIMIIISDILTIIGSILKMEI). Residues 363–371 (QAKSLTSYD) are Extracellular-facing. The helical transmembrane segment at 372-392 (VCSILLGTSTMLVWLGVIRYL) threads the bilayer. Over 393–414 (GFFAKYNLLILTLQAALPNVIR) the chain is Cytoplasmic. A helical transmembrane segment spans residues 415–435 (FCCCAAMIYLGYCFCGWIVLG). Residues 436–443 (PYHNKFRS) lie on the Extracellular side of the membrane. Residues 444-464 (LNMVSECLFSLINGDDMFATF) constitute an intramembrane region (pore-forming). Positions 456-459 (NGDD) match the Selectivity filter motif. The Extracellular portion of the chain corresponds to 465–475 (AKMQQKSYLVW). The chain crosses the membrane as a helical span at residues 476-497 (LFSRIYLYSFISLFIYMILSLF). Residues 498–553 (IALITDTYETIKHYQQDGFPETELRTFISECKDLPNSGKFRLEDDPPVSLFCCCKK) are Cytoplasmic-facing.

It belongs to the transient receptor (TC 1.A.4) family. Polycystin subfamily. MCOLN3 sub-subfamily. As to quaternary structure, homotetramer. Can heterooligomerize with MCOLN1; heteromeric assemblies have different channel properties as compared to the respective homooligomers and may be tissue-specific. May heterooligomerize with TRPV5 to form a functional distinct ion channel. Interacts with GABARAPL2. Post-translationally, N-glycosylated.

It is found in the lysosome membrane. It localises to the early endosome membrane. Its subcellular location is the late endosome membrane. The protein resides in the cytoplasmic vesicle. The protein localises to the autophagosome membrane. It is found in the cell projection. It localises to the stereocilium membrane. The catalysed reaction is Ca(2+)(in) = Ca(2+)(out). The enzyme catalyses Mg(2+)(in) = Mg(2+)(out). It carries out the reaction K(+)(in) = K(+)(out). It catalyses the reaction Na(+)(in) = Na(+)(out). Its activity is regulated as follows. Channel activity is activated by PtdIns(3,5)P2 (phosphatidylinositol 3,5-bisphosphate). Inhibited by lumenal H(+) and Na(+). The channel pore shows dynamic behavior and undergoes spontaneous, Ca(2+)-dependent modulation when conducting Ca(2+). Its function is as follows. Nonselective cation channel probably playing a role in the regulation of membrane trafficking events. Acts as a Ca(2+)-permeable cation channel with inwardly rectifying activity. Mediates release of Ca(2+) from endosomes to the cytoplasm, contributes to endosomal acidification and is involved in the regulation of membrane trafficking and fusion in the endosomal pathway. Also permeable to Mg(2+), Na(+) and K(+). Does not seem to act as mechanosensory transduction channel in inner ear sensory hair cells. Proposed to play a critical role at the cochlear stereocilia ankle-link region during hair-bundle growth. Involved in the regulation of autophagy. Through association with GABARAPL2 may be involved in autophagosome formation possibly providing Ca(2+) for the fusion process. Through a possible and probably tissue-specific heteromerization with MCOLN1 may be at least in part involved in many lysosome-dependent cellular events. Possible heteromeric ion channel assemblies with TRPV5 show pharmacological similarity with TRPML3. The polypeptide is Mucolipin-3 (Callithrix jacchus (White-tufted-ear marmoset)).